The chain runs to 61 residues: Probable tautomerase lmo2564 (61 aa).

Proline 2 (proton acceptor; via imino nitrogen) is an active-site residue.

This sequence belongs to the 4-oxalocrotonate tautomerase family.

This Listeria monocytogenes serovar 1/2a (strain ATCC BAA-679 / EGD-e) protein is Probable tautomerase lmo2564.